Consider the following 63-residue polypeptide: Laccase-C1 (63 aa).

Belongs to the multicopper oxidase family. Monomer. Cu cation is required as a cofactor. Glycosylated; contains 16% carbohydrates.

Its subcellular location is the secreted. The enzyme catalyses 4 hydroquinone + O2 = 4 benzosemiquinone + 2 H2O. Inhibited by sodium azide. Functionally, lignin degradation and detoxification of lignin-derived products. Oxidation of a broad range of substrates including mono-, di- and polyphenols, aromatic amines and methoxy-substituted phenols accompanied by reduction of oxygen to water. The protein is Laccase-C1 of Cerrena unicolor (Canker rot fungus).